Reading from the N-terminus, the 120-residue chain is Flagellar protein FliT (120 aa).

Residues 1-50 are required for homodimerization; the sequence is MERHQHLLSEYQQILTLSEQMLMLATVENWNALVDLEMTYLKAVENTANI. The tract at residues 60-98 is fliD binding; sequence LQELLRQKLRSILENEIEIKRLLQRRLDKLSELVGQSTR.

The protein belongs to the FliT family. As to quaternary structure, homodimer. Interacts with FliD and FlhC.

It is found in the cytoplasm. The protein resides in the cytosol. Dual-function protein that regulates the transcription of class 2 flagellar operons and that also acts as an export chaperone for the filament-capping protein FliD. As a transcriptional regulator, acts as an anti-FlhDC factor; it directly binds FlhC, thus inhibiting the binding of the FlhC/FlhD complex to class 2 promoters, resulting in decreased expression of class 2 flagellar operons. As a chaperone, effects FliD transition to the membrane by preventing its premature polymerization, and by directing it to the export apparatus. The sequence is that of Flagellar protein FliT from Yersinia pestis bv. Antiqua (strain Antiqua).